The sequence spans 249 residues: Probable transcriptional regulatory protein ZMO0153 (249 aa).

The protein belongs to the TACO1 family.

It localises to the cytoplasm. In Zymomonas mobilis subsp. mobilis (strain ATCC 31821 / ZM4 / CP4), this protein is Probable transcriptional regulatory protein ZMO0153.